We begin with the raw amino-acid sequence, 234 residues long: Sugar fermentation stimulation protein homolog (234 aa).

Belongs to the SfsA family.

The polypeptide is Sugar fermentation stimulation protein homolog (Shewanella sp. (strain MR-4)).